Reading from the N-terminus, the 446-residue chain is N-succinylarginine dihydrolase (446 aa).

Substrate is bound by residues 19–28 (AGLSFGNVAS), Asn110, and 137–138 (HR). Glu174 is an active-site residue. Arg213 is a substrate binding site. His249 is a catalytic residue. Residues Asp251 and Asn364 each coordinate substrate. Cys370 functions as the Nucleophile in the catalytic mechanism.

The protein belongs to the succinylarginine dihydrolase family. In terms of assembly, homodimer.

The catalysed reaction is N(2)-succinyl-L-arginine + 2 H2O + 2 H(+) = N(2)-succinyl-L-ornithine + 2 NH4(+) + CO2. It participates in amino-acid degradation; L-arginine degradation via AST pathway; L-glutamate and succinate from L-arginine: step 2/5. Its function is as follows. Catalyzes the hydrolysis of N(2)-succinylarginine into N(2)-succinylornithine, ammonia and CO(2). The sequence is that of N-succinylarginine dihydrolase from Burkholderia lata (strain ATCC 17760 / DSM 23089 / LMG 22485 / NCIMB 9086 / R18194 / 383).